A 285-amino-acid polypeptide reads, in one-letter code: 4-hydroxybenzoate octaprenyltransferase (285 aa).

7 helical membrane-spanning segments follow: residues 17–37 (PVGIFLLLWPTLWALWIAGAG), 41–61 (PKVLLVFVAGVALMRSAGCVI), 92–112 (LLLFAGLCLVAFGLVLLLNPL), 135–155 (HWPQAYLGAAFGWAVPMAFAA), 158–178 (GTVPIAAWLLFIATVLWATVY), 216–236 (ALLLLLFWIGYREGLGFYYYL), and 263–283 (AFLNNNAFGAVIFGGIALHYL).

It belongs to the UbiA prenyltransferase family. Mg(2+) is required as a cofactor.

It localises to the cell inner membrane. The enzyme catalyses all-trans-octaprenyl diphosphate + 4-hydroxybenzoate = 4-hydroxy-3-(all-trans-octaprenyl)benzoate + diphosphate. It participates in cofactor biosynthesis; ubiquinone biosynthesis. Its function is as follows. Catalyzes the prenylation of para-hydroxybenzoate (PHB) with an all-trans polyprenyl group. Mediates the second step in the final reaction sequence of ubiquinone-8 (UQ-8) biosynthesis, which is the condensation of the polyisoprenoid side chain with PHB, generating the first membrane-bound Q intermediate 3-octaprenyl-4-hydroxybenzoate. In Nitrosococcus oceani (strain ATCC 19707 / BCRC 17464 / JCM 30415 / NCIMB 11848 / C-107), this protein is 4-hydroxybenzoate octaprenyltransferase.